A 173-amino-acid chain; its full sequence is Ribosome maturation factor RimM (173 aa).

The PRC barrel domain maps to 97-171 (EGEFFYHEII…QITIEPMEGL (75 aa)).

This sequence belongs to the RimM family. As to quaternary structure, binds ribosomal protein uS19.

Its subcellular location is the cytoplasm. In terms of biological role, an accessory protein needed during the final step in the assembly of 30S ribosomal subunit, possibly for assembly of the head region. Essential for efficient processing of 16S rRNA. May be needed both before and after RbfA during the maturation of 16S rRNA. It has affinity for free ribosomal 30S subunits but not for 70S ribosomes. The sequence is that of Ribosome maturation factor RimM from Halalkalibacterium halodurans (strain ATCC BAA-125 / DSM 18197 / FERM 7344 / JCM 9153 / C-125) (Bacillus halodurans).